A 539-amino-acid chain; its full sequence is Protein Wnt-4 (539 aa).

A signal peptide spans methionine 1 to glycine 21. The interval glutamine 34–isoleucine 77 is disordered. The segment covering glutamine 51 to asparagine 74 has biased composition (low complexity). Residues asparagine 74 and asparagine 284 are each glycosylated (N-linked (GlcNAc...) asparagine). Cystine bridges form between cysteine 274–cysteine 285, cysteine 322–cysteine 330, cysteine 332–cysteine 349, cysteine 397–cysteine 411, and cysteine 399–cysteine 406. The O-palmitoleoyl serine; by PORCN moiety is linked to residue serine 403. Asparagine 419 carries N-linked (GlcNAc...) asparagine glycosylation. Residues alanine 436–serine 463 are disordered. Over residues glutamine 439–serine 448 the composition is skewed to low complexity. Positions arginine 449 to proline 460 are enriched in basic residues. 6 disulfides stabilise this stretch: cysteine 478–cysteine 497, cysteine 486–cysteine 492, cysteine 496–cysteine 538, cysteine 512–cysteine 529, cysteine 514–cysteine 526, and cysteine 521–cysteine 522.

It belongs to the Wnt family. Post-translationally, palmitoleoylated by porcupine. The lipid group functions as a sorting signal, targeting the ligand to polarized vesicles that transport Wnt4 to unique sites at the cell surface. Depalmitoleoylated by notum, leading to inhibit Wnt signaling pathway.

Its subcellular location is the secreted. The protein localises to the extracellular space. The protein resides in the extracellular matrix. Functionally, binds as a ligand to a family of frizzled seven-transmembrane receptors and acts through a cascade of genes on the nucleus. Acts downstream of homeotic complex genes in the visceral mesoderm and is required for embryonic segmentation. Also required for cell movement and FAK regulation during ovarian morphogenesis. This Drosophila melanogaster (Fruit fly) protein is Protein Wnt-4 (Wnt4).